The following is a 1202-amino-acid chain: Probable DNA polymerase (1202 aa).

Belongs to the DNA polymerase type-B family.

The protein resides in the mitochondrion. The enzyme catalyses DNA(n) + a 2'-deoxyribonucleoside 5'-triphosphate = DNA(n+1) + diphosphate. The chain is Probable DNA polymerase from Ascobolus immersus.